The following is a 122-amino-acid chain: UPF0738 protein YjbL (122 aa).

Belongs to the UPF0738 family.

The sequence is that of UPF0738 protein YjbL (yjbL) from Bacillus subtilis (strain 168).